We begin with the raw amino-acid sequence, 261 residues long: Cobalt transport protein CbiM (261 aa).

The first 33 residues, 1 to 33, serve as a signal peptide directing secretion; the sequence is MLRRVLASKRASLILMGMLSFYIIVSASAPAYA. A run of 7 helical transmembrane segments spans residues 41–61, 76–96, 108–128, 140–160, 172–192, 197–217, and 220–240; these read LPAG…LLGV, LLLA…LPSV, LGSV…VLLF, TLGA…YWIY, IAIF…TSVQ, FPAP…IFAI, and IPLA…LQSY.

It belongs to the CbiM family. Forms an energy-coupling factor (ECF) transporter complex composed of an ATP-binding protein (A component, CbiO), a transmembrane protein (T component, CbiQ) and 2 possible substrate-capture proteins (S components, CbiM and CbiN) of unknown stoichimetry.

It is found in the cell inner membrane. The protein operates within cofactor biosynthesis; adenosylcobalamin biosynthesis. Its function is as follows. Part of the energy-coupling factor (ECF) transporter complex CbiMNOQ involved in cobalt import. In Nostoc sp. (strain PCC 7120 / SAG 25.82 / UTEX 2576), this protein is Cobalt transport protein CbiM.